Here is a 283-residue protein sequence, read N- to C-terminus: 4-diphosphocytidyl-2-C-methyl-D-erythritol kinase (283 aa).

K10 is a catalytic residue. 99–109 serves as a coordination point for ATP; sequence PMGGGLGGGSS. Residue D141 is part of the active site.

Belongs to the GHMP kinase family. IspE subfamily. In terms of assembly, homodimer.

It catalyses the reaction 4-CDP-2-C-methyl-D-erythritol + ATP = 4-CDP-2-C-methyl-D-erythritol 2-phosphate + ADP + H(+). The protein operates within isoprenoid biosynthesis; isopentenyl diphosphate biosynthesis via DXP pathway; isopentenyl diphosphate from 1-deoxy-D-xylulose 5-phosphate: step 3/6. In terms of biological role, catalyzes the phosphorylation of the position 2 hydroxy group of 4-diphosphocytidyl-2C-methyl-D-erythritol. The protein is 4-diphosphocytidyl-2-C-methyl-D-erythritol kinase of Shigella boydii serotype 18 (strain CDC 3083-94 / BS512).